Consider the following 510-residue polypeptide: NAD(P)H-quinone oxidoreductase subunit 2 B, chloroplastic (510 aa).

13 helical membrane passes run 24-44 (LLLFDGSFIFPECILIFGLIL), 57-77 (IPWLYFISSTSLVMSITALLF), 99-119 (IFQFLILLCSTLCIPLSVEYI), 124-144 (MAITEFLLFVLTATLGGMFLC), 149-169 (LITIFVAPECFSLCSYLLSGY), 183-203 (YLLMGGASSSILVHAFSWLYG), 227-247 (PGISIALIFITVGIGFKLSLA), 295-315 (WHLLLEILAILSMIVGNLIAI), 323-343 (MLAYSSIGQIGYVIIGIIVGD), 354-374 (YMLFYISMNLGTFACIVLFGL), 395-415 (ALSLALCLLSLGGLPPLAGFF), 418-438 (LHLFWCGWQAGLYFLVLIGLL), and 482-502 (LSMIVCVIASTIPGISMNPIV).

It belongs to the complex I subunit 2 family. In terms of assembly, NDH is composed of at least 16 different subunits, 5 of which are encoded in the nucleus.

The protein resides in the plastid. Its subcellular location is the chloroplast thylakoid membrane. It catalyses the reaction a plastoquinone + NADH + (n+1) H(+)(in) = a plastoquinol + NAD(+) + n H(+)(out). The catalysed reaction is a plastoquinone + NADPH + (n+1) H(+)(in) = a plastoquinol + NADP(+) + n H(+)(out). NDH shuttles electrons from NAD(P)H:plastoquinone, via FMN and iron-sulfur (Fe-S) centers, to quinones in the photosynthetic chain and possibly in a chloroplast respiratory chain. The immediate electron acceptor for the enzyme in this species is believed to be plastoquinone. Couples the redox reaction to proton translocation, and thus conserves the redox energy in a proton gradient. The polypeptide is NAD(P)H-quinone oxidoreductase subunit 2 B, chloroplastic (Manihot esculenta (Cassava)).